A 269-amino-acid chain; its full sequence is Putative hydro-lyase Aave_3512 (269 aa).

This sequence belongs to the D-glutamate cyclase family.

The polypeptide is Putative hydro-lyase Aave_3512 (Paracidovorax citrulli (strain AAC00-1) (Acidovorax citrulli)).